A 191-amino-acid polypeptide reads, in one-letter code: Cell division protein SepF (191 aa).

The disordered stretch occupies residues 1–77 (MEGQDDYQLL…MGSNVIGLPG (77 aa)).

It belongs to the SepF family. In terms of assembly, homodimer. Interacts with FtsZ.

The protein localises to the cytoplasm. Cell division protein that is part of the divisome complex and is recruited early to the Z-ring. Probably stimulates Z-ring formation, perhaps through the cross-linking of FtsZ protofilaments. Its function overlaps with FtsA. This Synechococcus sp. (strain JA-2-3B'a(2-13)) (Cyanobacteria bacterium Yellowstone B-Prime) protein is Cell division protein SepF.